We begin with the raw amino-acid sequence, 447 residues long: GTPase Der (447 aa).

2 EngA-type G domains span residues 4-165 (QIIT…PEEE) and 180-357 (LQIV…KIWN). GTP-binding positions include 10 to 17 (GRPNVGKS), 57 to 61 (DTPGL), 119 to 122 (NKCE), 186 to 193 (GRPNAGKS), 233 to 237 (DTAGL), and 298 to 301 (NKWD). The 86-residue stretch at 358–443 (KKITTSKLNE…PIRFTYVKTK (86 aa)) folds into the KH-like domain.

This sequence belongs to the TRAFAC class TrmE-Era-EngA-EngB-Septin-like GTPase superfamily. EngA (Der) GTPase family. Associates with the 50S ribosomal subunit.

Functionally, GTPase that plays an essential role in the late steps of ribosome biogenesis. This chain is GTPase Der, found in Rickettsia rickettsii (strain Iowa).